Reading from the N-terminus, the 207-residue chain is Phosphatidylinositol phosphate synthase (207 aa).

A run of 2 helical transmembrane segments spans residues 21–44 (LRAHVTPDVVTWIGTIGAVLMALI) and 50–67 (WLWQGPWLVTLFIFSDSL). An a CDP-1,2-diacyl-sn-glycerol-binding site is contributed by 28–31 (DVVT). Mg(2+) contacts are provided by D65 and D68. Residues G69, R73, and S79 each contribute to the a CDP-1,2-diacyl-sn-glycerol site. Residues D86 and D90 each coordinate Mg(2+). Helical transmembrane passes span 88–106 (TLDRFGDAAIFTGVALYFA), 112–131 (VLWTAMACAALVFGMATSYV), 152–170 (RLLVSLVAIEITGLARVGA), and 176–195 (VVALPIALCYLTLAGAITVV). D90 functions as the Proton acceptor in the catalytic mechanism.

It belongs to the CDP-alcohol phosphatidyltransferase class-I family. In terms of assembly, homodimer. Mg(2+) serves as cofactor.

The protein resides in the cell membrane. The enzyme catalyses a CDP-1,2-diacyl-sn-glycerol + 1D-myo-inositol 3-phosphate = a 1,2-diacyl-sn-glycero-3-phospho-(1D-myo-inositol-3-phosphate) + CMP + H(+). It carries out the reaction 1,2-di-(9Z-octadecenoyl)-sn-glycero-3-cytidine-5'-diphosphate + 1D-myo-inositol 3-phosphate = 1,2-di-(9Z-octadecenoyl)-sn-glycero-3-phospho-(1D-myo-inositol-3-phosphate) + CMP + H(+). Its pathway is phospholipid metabolism; phosphatidylinositol phosphate biosynthesis. Functionally, catalyzes the conjugation of the 1'-hydroxyl group of D-myo-inositol-3-phosphate (also named L-myo-inositol-1-phosphate) with a lipid tail of cytidine diphosphate diacylglycerol (CDP-DAG), forming phosphatidylinositol phosphate (PIP) and CMP. PIP is a precursor of phosphatidylinositol (PI) which is an essential lipid required for cell wall formation. The protein is Phosphatidylinositol phosphate synthase of Cutibacterium acnes (strain DSM 16379 / KPA171202) (Propionibacterium acnes).